Consider the following 275-residue polypeptide: NH(3)-dependent NAD(+) synthetase (275 aa).

Residue 50–57 (GISGGVDS) participates in ATP binding. A Mg(2+)-binding site is contributed by Asp-56. Residue Arg-147 participates in deamido-NAD(+) binding. Thr-167 provides a ligand contact to ATP. Glu-172 lines the Mg(2+) pocket. Positions 180 and 187 each coordinate deamido-NAD(+). Positions 196 and 218 each coordinate ATP. A deamido-NAD(+)-binding site is contributed by 267 to 268 (HK).

The protein belongs to the NAD synthetase family. As to quaternary structure, homodimer.

It catalyses the reaction deamido-NAD(+) + NH4(+) + ATP = AMP + diphosphate + NAD(+) + H(+). It functions in the pathway cofactor biosynthesis; NAD(+) biosynthesis; NAD(+) from deamido-NAD(+) (ammonia route): step 1/1. In terms of biological role, catalyzes the ATP-dependent amidation of deamido-NAD to form NAD. Uses ammonia as a nitrogen source. This is NH(3)-dependent NAD(+) synthetase from Pseudomonas syringae pv. tomato (strain ATCC BAA-871 / DC3000).